The sequence spans 101 residues: Peroxisomal biogenesis factor 39 (101 aa).

It localises to the peroxisome. In terms of biological role, may be a peroxin involved in the PTS2-mediated protein import pathway. This is Peroxisomal biogenesis factor 39 from Homo sapiens (Human).